Reading from the N-terminus, the 920-residue chain is Isoleucine--tRNA ligase (920 aa).

Residues 57–67 (PYANGDIHLGH) carry the 'HIGH' region motif. Glu560 serves as a coordination point for L-isoleucyl-5'-AMP. Positions 601–605 (KMSKS) match the 'KMSKS' region motif. An ATP-binding site is contributed by Lys604. Residues Cys890, Cys893, Cys910, and Cys913 each coordinate Zn(2+).

This sequence belongs to the class-I aminoacyl-tRNA synthetase family. IleS type 1 subfamily. In terms of assembly, monomer. Zn(2+) serves as cofactor.

It is found in the cytoplasm. The enzyme catalyses tRNA(Ile) + L-isoleucine + ATP = L-isoleucyl-tRNA(Ile) + AMP + diphosphate. Catalyzes the attachment of isoleucine to tRNA(Ile). As IleRS can inadvertently accommodate and process structurally similar amino acids such as valine, to avoid such errors it has two additional distinct tRNA(Ile)-dependent editing activities. One activity is designated as 'pretransfer' editing and involves the hydrolysis of activated Val-AMP. The other activity is designated 'posttransfer' editing and involves deacylation of mischarged Val-tRNA(Ile). This is Isoleucine--tRNA ligase from Caldicellulosiruptor bescii (strain ATCC BAA-1888 / DSM 6725 / KCTC 15123 / Z-1320) (Anaerocellum thermophilum).